Consider the following 322-residue polypeptide: Beta-ketoacyl-[acyl-carrier-protein] synthase III (322 aa).

Active-site residues include C113 and H249. The tract at residues 250–254 is ACP-binding; sequence QANIR. N279 is an active-site residue.

This sequence belongs to the thiolase-like superfamily. FabH family. Homodimer.

It is found in the cytoplasm. It catalyses the reaction malonyl-[ACP] + acetyl-CoA + H(+) = 3-oxobutanoyl-[ACP] + CO2 + CoA. It participates in lipid metabolism; fatty acid biosynthesis. Functionally, catalyzes the condensation reaction of fatty acid synthesis by the addition to an acyl acceptor of two carbons from malonyl-ACP. Catalyzes the first condensation reaction which initiates fatty acid synthesis and may therefore play a role in governing the total rate of fatty acid production. Possesses both acetoacetyl-ACP synthase and acetyl transacylase activities. Its substrate specificity determines the biosynthesis of branched-chain and/or straight-chain of fatty acids. The sequence is that of Beta-ketoacyl-[acyl-carrier-protein] synthase III from Thioalkalivibrio sulfidiphilus (strain HL-EbGR7).